The chain runs to 453 residues: GTPase Der (453 aa).

EngA-type G domains lie at Pro-3–Glu-178 and Leu-190–Ser-363. GTP contacts are provided by residues Gly-9 to Ser-16, Asp-57 to Val-61, Asn-130 to Asp-133, Gly-196 to Ser-203, Asp-243 to Ile-247, and Asn-308 to Asp-311. The 85-residue stretch at Thr-364–His-448 folds into the KH-like domain.

The protein belongs to the TRAFAC class TrmE-Era-EngA-EngB-Septin-like GTPase superfamily. EngA (Der) GTPase family. Associates with the 50S ribosomal subunit.

Its function is as follows. GTPase that plays an essential role in the late steps of ribosome biogenesis. The protein is GTPase Der of Lawsonia intracellularis (strain PHE/MN1-00).